Consider the following 208-residue polypeptide: Transmembrane protein 222 (208 aa).

The tract at residues 1–26 is disordered; that stretch reads MAEAEGSSLLLLPPPPPPPRMAEVEA. Residues 1–55 are Extracellular-facing; it reads MAEAEGSSLLLLPPPPPPPRMAEVEAPTAAETDMKQYQGSGGVAMDVERSRFPYC. A helical transmembrane segment spans residues 56–76; that stretch reads VVWTPIPVLTWFFPIIGHMGI. Residues 77–164 are Cytoplasmic-facing; sequence CTSTGVIRDF…MRYNNSTNWN (88 aa). Residues 165-185 form a helical membrane-spanning segment; the sequence is MVTLCFFCLLYGKYVSVGAFV. Residue Lys186 is a topological domain, extracellular. A helical membrane pass occupies residues 187–207; it reads TWLPFILLLGIILTVSLVFNL. Arg208 is a topological domain (cytoplasmic).

Widely expressed. The highest expression is observed in the brain.

Its subcellular location is the membrane. The protein resides in the cell projection. It is found in the dendrite. In Homo sapiens (Human), this protein is Transmembrane protein 222 (TMEM222).